A 906-amino-acid chain; its full sequence is MLSILKKLFGTANDRTVKKLFSEITKINSLEPVIQKLSDEELKNKTVEFKEKLKNGATLDDILYEAFAVVRESARRVCGMRHFDVQLIGGLILHQGMITEMRTGEGKTLVATLPAYLNALTGKGVHVVTVNDYLASRDSASMGKIYNFLGLSVGCIVAGMSDEAKRAAYNADITHATNNELGFDYLRDNMKYSIQERVLRPFNFAIIDEVDSILIDEARTPLVISGPVNDNSELYTKIDKIVRQLKAGDFEKDEKLKTIHLTELGITHIESLLSNENIIKPDSGLYDFENLTLVHYINQALRAHNMFNVDVDYLVRDGQVMIIDEFTGRVMEGRRYSEGLHQALEAKENVKIQNENQTLASITFQNYFRNYPKLSGMTGTAMTEAPELKDIYNLDVVAVPTHNKVTRVDLDDEIYGSKKEKYDAILKLIKDCYNRGQPILVGTISIEKSEELSSVLNKEKIPHKILNAKFHEQEAFIIAQAGRFRAVTIATNMAGRGTDIMLGGNPEMLIEQLAKDHSYEAKIAEIKAQIAEEKKKVIEAGGLFVIGTERHESRRIDNQLRGRSGRQGDPGKTQFFLSLDDDLMRIFASERISGVLRTLGLKDGEAIHHPMISRSLEKAQQKVEGHNYEIRKNLLRFDDVMNDQRKIIYEQRTEIIKSKDSYDFLNSTTAELAKKIVLTFMPAGSYREDWDIENLSVELHRIFSIKFDHNLVSKNDVTEEEITKSVIQMAHDIYKSKEESYSSELMHNAVKYILLTTLDQVWKDHLYSLDHLRQGISLRAYAQQDPLSEYKREAFNLFEQMLDNLKELFIQTVYHFHIDLKHVQKEDVSLEHKKFQKNMQESREDPAFSKYNAGSSLEIDLKPVVSRIDPKDRNPEDPTSWGRVSRNELCPCRSGKKYKYCHGANA.

ATP-binding positions include Q86, 104–108, and D499; that span reads GEGKT. Positions 865-885 are disordered; that stretch reads VSRIDPKDRNPEDPTSWGRVS. Zn(2+) is bound by residues C890, C892, C901, and H902.

This sequence belongs to the SecA family. Monomer and homodimer. Part of the essential Sec protein translocation apparatus which comprises SecA, SecYEG and auxiliary proteins SecDF-YajC and YidC. It depends on Zn(2+) as a cofactor.

The protein resides in the cell inner membrane. It localises to the cytoplasm. It catalyses the reaction ATP + H2O + cellular proteinSide 1 = ADP + phosphate + cellular proteinSide 2.. Functionally, part of the Sec protein translocase complex. Interacts with the SecYEG preprotein conducting channel. Has a central role in coupling the hydrolysis of ATP to the transfer of proteins into and across the cell membrane, serving both as a receptor for the preprotein-SecB complex and as an ATP-driven molecular motor driving the stepwise translocation of polypeptide chains across the membrane. This is Protein translocase subunit SecA from Rickettsia canadensis (strain McKiel).